We begin with the raw amino-acid sequence, 255 residues long: Cell division protein ZapD (255 aa).

It belongs to the ZapD family. As to quaternary structure, interacts with FtsZ.

It localises to the cytoplasm. Functionally, cell division factor that enhances FtsZ-ring assembly. Directly interacts with FtsZ and promotes bundling of FtsZ protofilaments, with a reduction in FtsZ GTPase activity. The protein is Cell division protein ZapD of Methylococcus capsulatus (strain ATCC 33009 / NCIMB 11132 / Bath).